The sequence spans 463 residues: Vacuolar cation/proton exchanger 1 (463 aa).

Alanine 2 carries the N-acetylalanine modification. Topologically, residues 2 to 68 (AGIVTEPWSV…LKDFLSNLQE (67 aa)) are cytoplasmic. Positions 25 to 33 (SRELRLGRT) are required for autoinhibitory regulation. The interval 56-62 (YKGLKDF) is required for interaction with autoinhibitory region. The helical transmembrane segment at 69–89 (VILGTKLAILFPAIPAAIICT) threads the bilayer. Residues 87 to 95 (ICTYCGVSQ) form a required for Ca(2+)/H(+) exchange activity region. The Extracellular portion of the chain corresponds to 90–96 (YCGVSQP). The chain crosses the membrane as a helical span at residues 97–116 (WIFGLSLLGLTPLAERVSFL). At 117 to 127 (TEQLAFYTGPT) the chain is on the cytoplasmic side. A helical transmembrane segment spans residues 128–148 (LGGLLNATCGNATELIIAILA). Residues 137 to 172 (GNATELIIAILALTNNKVAVVKYSLLGSILSNLLLV) are cation selection. The Extracellular segment spans residues 149–161 (LTNNKVAVVKYSL). Residues 162–182 (LGSILSNLLLVLGTSLFCGGI) traverse the membrane as a helical segment. At 183–197 (ANIRREQRFDRKQAD) the chain is on the cytoplasmic side. A helical membrane pass occupies residues 198–218 (VNFFLLLLGFLCHLLPLLVGY). At 219-238 (LKNGEASAAVLSDMQLSISR) the chain is on the extracellular side. A helical transmembrane segment spans residues 239–259 (GFSIVMLISYIAYLVFQLWTH). Topologically, residues 260–281 (RQLFDAQEQEDEYDDDVEQETA) are cytoplasmic. A helical membrane pass occupies residues 282–302 (VISFWSGFAWLVGMTLVIALL). Over 303–325 (SEYVVATIEEASDKWNLSVSFIS) the chain is Extracellular. N-linked (GlcNAc...) asparagine glycosylation is present at asparagine 318. The chain crosses the membrane as a helical span at residues 326–346 (IILLPIVGNAAEHAGAVIFAF). The segment at 333–368 (GNAAEHAGAVIFAFKNKLDISLGVALGSATQIGLFV) is cation selection. The Cytoplasmic segment spans residues 347–360 (KNKLDISLGVALGS). A helical membrane pass occupies residues 361-381 (ATQIGLFVVPLTIIVAWILGI). The Extracellular portion of the chain corresponds to 382 to 384 (NMD). The helical transmembrane segment at 385–405 (LNFGPLETGCLAVSIIITAFT) threads the bilayer. The Cytoplasmic portion of the chain corresponds to 406 to 411 (LQDGSS). Residues 412 to 432 (HYMKGLVLLLCYFIIAICFFV) form a helical membrane-spanning segment. At 433–463 (DKLPQKQNAIHLGHQAMNNVVTATGGGVFSS) the chain is on the extracellular side.

It belongs to the Ca(2+):cation antiporter (CaCA) (TC 2.A.19) family. Cation/proton exchanger (CAX) subfamily. In terms of assembly, interacts with GRXS14 and CXIP4. As to expression, expressed at low levels in leaves, stems and flowers.

The protein localises to the vacuole membrane. Activated by monothiol glutaredoxin GRXS14 and CXIP4. Inhibited by excess of Ca(2+) and Cd(2+), Na(+) and K(+), but not Mn(2+). Vacuolar cation/proton exchanger (CAX). Translocates Ca(2+) and other metal ions into vacuoles using the proton gradient formed by H(+)-ATPase and H(+)-pyrophosphatase. Involved in ion homeostasis in association with CAX3. May play a role in cold-acclimation response. This chain is Vacuolar cation/proton exchanger 1 (CAX1), found in Arabidopsis thaliana (Mouse-ear cress).